A 212-amino-acid chain; its full sequence is General odorant-binding protein 68 (212 aa).

The first 28 residues, 1-28 (MATTIARIGSANWAKLLVLLWLVQLATA), serve as a signal peptide directing secretion. Disulfide bonds link cysteine 64-cysteine 85, cysteine 80-cysteine 152, and cysteine 130-cysteine 162.

Belongs to the PBP/GOBP family.

The protein resides in the secreted. Present in the aqueous fluid surrounding olfactory sensory dendrites and are thought to aid in the capture and transport of hydrophobic odorants into and through this fluid. The polypeptide is General odorant-binding protein 68 (Obp68) (Anopheles gambiae (African malaria mosquito)).